The chain runs to 611 residues: Probable inactive purple acid phosphatase 27 (611 aa).

The N-terminal stretch at 1–18 is a signal peptide; that stretch reads MARNFLLVLLWFIVQVSS. N-linked (GlcNAc...) asparagine glycans are attached at residues N263 and N271. D293 lines the Fe cation pocket. The N-linked (GlcNAc...) asparagine glycan is linked to N314. Fe cation contacts are provided by D334 and Y337. Position 334 (D334) interacts with Zn(2+). Residues N367, H456, and H498 each contribute to the Zn(2+) site. N367 provides a ligand contact to substrate. 498-500 lines the substrate pocket; the sequence is HVH. A Fe cation-binding site is contributed by H500.

Belongs to the metallophosphoesterase superfamily. Purple acid phosphatase family. Homodimer. Fe cation is required as a cofactor. Zn(2+) serves as cofactor. As to expression, expressed in roots, stems, leaves, flowers and siliques.

The protein resides in the secreted. The polypeptide is Probable inactive purple acid phosphatase 27 (PAP27) (Arabidopsis thaliana (Mouse-ear cress)).